The chain runs to 724 residues: Acyl-coenzyme A oxidase 2 (724 aa).

The disordered stretch occupies residues 1–48 (MAMLSQPNDGHDHPEKKDPDTTPKQVAGVISSQDPPHPAKDVAEERAR). Composition is skewed to basic and acidic residues over residues 9 to 21 (DGHDHPEKKDPDT) and 37 to 48 (HPAKDVAEERAR).

This sequence belongs to the acyl-CoA oxidase family. It depends on FAD as a cofactor.

Its subcellular location is the peroxisome. The catalysed reaction is a 2,3-saturated acyl-CoA + O2 = a (2E)-enoyl-CoA + H2O2. It participates in lipid metabolism; peroxisomal fatty acid beta-oxidation. The polypeptide is Acyl-coenzyme A oxidase 2 (POX2) (Candida tropicalis (Yeast)).